A 240-amino-acid polypeptide reads, in one-letter code: Large ribosomal subunit protein uL2 (240 aa).

The span at 1 to 12 (MGRRIQGQRRGR) shows a compositional bias: basic residues. Disordered regions lie at residues 1–21 (MGRRIQGQRRGRGGPTFRAPS) and 198–240 (VDHP…GSNK). Basic and acidic residues predominate over residues 221-231 (PPGRKVGDIAS).

This sequence belongs to the universal ribosomal protein uL2 family. As to quaternary structure, part of the 50S ribosomal subunit. Forms a bridge to the 30S subunit in the 70S ribosome.

Functionally, one of the primary rRNA binding proteins. Required for association of the 30S and 50S subunits to form the 70S ribosome, for tRNA binding and peptide bond formation. It has been suggested to have peptidyltransferase activity; this is somewhat controversial. Makes several contacts with the 16S rRNA in the 70S ribosome. The sequence is that of Large ribosomal subunit protein uL2 from Halorubrum lacusprofundi (strain ATCC 49239 / DSM 5036 / JCM 8891 / ACAM 34).